Here is a 247-residue protein sequence, read N- to C-terminus: Enolase-phosphatase E1 (247 aa).

Residues Asp12 and Glu14 each contribute to the Mg(2+) site. Substrate contacts are provided by residues 141-142 (SS) and Lys175. Residue Asp200 participates in Mg(2+) binding.

This sequence belongs to the HAD-like hydrolase superfamily. MasA/MtnC family. As to quaternary structure, monomer. The cofactor is Mg(2+).

The protein resides in the cytoplasm. It localises to the nucleus. The catalysed reaction is 5-methylsulfanyl-2,3-dioxopentyl phosphate + H2O = 1,2-dihydroxy-5-(methylsulfanyl)pent-1-en-3-one + phosphate. It functions in the pathway amino-acid biosynthesis; L-methionine biosynthesis via salvage pathway; L-methionine from S-methyl-5-thio-alpha-D-ribose 1-phosphate: step 3/6. Its pathway is amino-acid biosynthesis; L-methionine biosynthesis via salvage pathway; L-methionine from S-methyl-5-thio-alpha-D-ribose 1-phosphate: step 4/6. Functionally, bifunctional enzyme that catalyzes the enolization of 2,3-diketo-5-methylthiopentyl-1-phosphate (DK-MTP-1-P) into the intermediate 2-hydroxy-3-keto-5-methylthiopentenyl-1-phosphate (HK-MTPenyl-1-P), which is then dephosphorylated to form the acireductone 1,2-dihydroxy-3-keto-5-methylthiopentene (DHK-MTPene). This chain is Enolase-phosphatase E1, found in Drosophila willistoni (Fruit fly).